We begin with the raw amino-acid sequence, 25 residues long: Kappa-conotoxin RIIIJ (25 aa).

4-hydroxyproline is present on residues proline 2, proline 3, proline 7, proline 8, proline 13, proline 15, and proline 21. 3 cysteine pairs are disulfide-bonded: cysteine 4-cysteine 17, cysteine 5-cysteine 22, and cysteine 12-cysteine 23.

It belongs to the conotoxin M superfamily. In terms of tissue distribution, expressed by the venom duct.

Its subcellular location is the secreted. Functionally, kappa-conotoxins inhibits voltage-gated potassium channels. This toxin dose-dependently and reversibly inhibits the Kv1.2/KCNA2 channel in mammalia. Does not exert protective effect on cardiac tissue when administered after an ischemic event. The sequence is that of Kappa-conotoxin RIIIJ from Conus radiatus (Rayed cone).